The chain runs to 169 residues: MSVDNVLDKLVDEKKYRRRDLRNSLASRIGIEDRPSSTPREPPKKRLRFTNVPLDVSDFTLEDMVKEFAEPIYCNFYDLKDSRTAVFEFEDPSVMERVVEKYNETPLNGGTVTVEIFEQERRPDRRRRTQRDNRRGNGRGSRGSHYKRQDRPAMEDELNAELEDYMKSS.

In terms of domain architecture, RRM spans 45–119 (KRLRFTNVPL…GTVTVEIFEQ (75 aa)). Positions 119 to 169 (QERRPDRRRRTQRDNRRGNGRGSRGSHYKRQDRPAMEDELNAELEDYMKSS) are disordered.

Belongs to the YRA1 family. Associates with mRNPs.

It is found in the nucleus. Its function is as follows. Involved in export of poly(A) mRNAs from the nucleus. Recruited to the coding sequences as well as poly-A sites of active genes. In Zygosaccharomyces rouxii (strain ATCC 2623 / CBS 732 / NBRC 1130 / NCYC 568 / NRRL Y-229), this protein is RNA annealing protein YRA2 (YRA2).